The following is a 305-amino-acid chain: N-acetylneuraminate lyase (305 aa).

Residues Thr51 and Thr52 each contribute to the aceneuramate site. Catalysis depends on Tyr143, which acts as the Proton donor. Catalysis depends on Lys173, which acts as the Schiff-base intermediate with substrate. Residues Thr175, Gly197, Asp199, Glu200, and Ser216 each contribute to the aceneuramate site.

It belongs to the DapA family. NanA subfamily. In terms of assembly, homotetramer.

It is found in the cytoplasm. The catalysed reaction is aceneuramate = aldehydo-N-acetyl-D-mannosamine + pyruvate. It functions in the pathway amino-sugar metabolism; N-acetylneuraminate degradation. Functionally, catalyzes the cleavage of N-acetylneuraminic acid (sialic acid) to form pyruvate and N-acetylmannosamine via a Schiff base intermediate. It prevents sialic acids from being recycled and returning to the cell surface. Involved in the N-glycolylneuraminic acid (Neu5Gc) degradation pathway. The protein is N-acetylneuraminate lyase of Xenopus tropicalis (Western clawed frog).